The primary structure comprises 76 residues: Conotoxin Cl6.4 (76 aa).

The signal sequence occupies residues 1-19 (MTLTFLLVVALCMLTTCHT). The propeptide occupies 20-47 (ENYRDSQKVSPVRSIGKTQFARSLRLSE). Disulfide bonds link Cys-50-Cys-66, Cys-57-Cys-70, and Cys-65-Cys-75.

Expressed by the venom duct.

It is found in the secreted. The chain is Conotoxin Cl6.4 from Californiconus californicus (California cone).